A 138-amino-acid chain; its full sequence is Large ribosomal subunit protein uL16 (138 aa).

Positions 1–13 (MLQPKRRKYRKEQ) are enriched in basic residues. A disordered region spans residues 1–24 (MLQPKRRKYRKEQKGRNTGKATRG).

The protein belongs to the universal ribosomal protein uL16 family. Part of the 50S ribosomal subunit.

In terms of biological role, binds 23S rRNA and is also seen to make contacts with the A and possibly P site tRNAs. In Burkholderia ambifaria (strain ATCC BAA-244 / DSM 16087 / CCUG 44356 / LMG 19182 / AMMD) (Burkholderia cepacia (strain AMMD)), this protein is Large ribosomal subunit protein uL16.